The chain runs to 372 residues: MHNQAPIQRRKSTRIYVGNVPIGDGAPIAVQSMTNTRTTDVEATVNQIKALERVGADIVRVSVPTMDAAEAFKLIKQQVNVPLVADIHFDYRIALKVAEYGVDCLRINPGNIGNEERIRMVVDCARDKNIPIRIGVNAGSLEKDLQEKYGEPTPQALLESAMRHVDHLDRLNFDQFKVSVKASDVFLAVESYRLLAKQIDQPLHLGITEAGGARSGAVKSAIGLGLLLSEGIGDTLRVSLAADPVEEIKVGFDILKSLRIRSRGINFIACPTCSRQEFDVIGTVNALEQRLEDIITPMDVSIIGCVVNGPGEALVSTLGVTGGNKKSGLYEDGVRKDRLDNNDMIDQLEARIRAKASQLDEARRIDVQQVEK.

The [4Fe-4S] cluster site is built by Cys-270, Cys-273, Cys-305, and Glu-312.

It belongs to the IspG family. The cofactor is [4Fe-4S] cluster.

It catalyses the reaction (2E)-4-hydroxy-3-methylbut-2-enyl diphosphate + oxidized [flavodoxin] + H2O + 2 H(+) = 2-C-methyl-D-erythritol 2,4-cyclic diphosphate + reduced [flavodoxin]. Its pathway is isoprenoid biosynthesis; isopentenyl diphosphate biosynthesis via DXP pathway; isopentenyl diphosphate from 1-deoxy-D-xylulose 5-phosphate: step 5/6. Converts 2C-methyl-D-erythritol 2,4-cyclodiphosphate (ME-2,4cPP) into 1-hydroxy-2-methyl-2-(E)-butenyl 4-diphosphate. The polypeptide is 4-hydroxy-3-methylbut-2-en-1-yl diphosphate synthase (flavodoxin) (Escherichia coli O139:H28 (strain E24377A / ETEC)).